Consider the following 337-residue polypeptide: ATP-dependent 6-phosphofructokinase (337 aa).

Gly-11 provides a ligand contact to ATP. An ADP-binding site is contributed by 21 to 25; it reads RAVVR. ATP-binding positions include 72–73 and 102–105; these read RY and GDGS. A Mg(2+)-binding site is contributed by Asp-103. 125–127 contributes to the substrate binding site; the sequence is TID. The Proton acceptor role is filled by Asp-127. An ADP-binding site is contributed by Arg-154. Substrate-binding positions include Arg-162 and 169–171; that span reads MGR. Residues 185-187, Lys-212, and 214-216 each bind ADP; these read GAD and KNH. Residues Glu-223, Arg-245, and 251–254 each bind substrate; that span reads HILR.

The protein belongs to the phosphofructokinase type A (PFKA) family. ATP-dependent PFK group I subfamily. Prokaryotic clade 'B1' sub-subfamily. As to quaternary structure, homotetramer. Mg(2+) serves as cofactor.

It localises to the cytoplasm. It catalyses the reaction beta-D-fructose 6-phosphate + ATP = beta-D-fructose 1,6-bisphosphate + ADP + H(+). Its pathway is carbohydrate degradation; glycolysis; D-glyceraldehyde 3-phosphate and glycerone phosphate from D-glucose: step 3/4. Its activity is regulated as follows. Allosterically activated by ADP and other diphosphonucleosides, and allosterically inhibited by phosphoenolpyruvate. In terms of biological role, catalyzes the phosphorylation of D-fructose 6-phosphate to fructose 1,6-bisphosphate by ATP, the first committing step of glycolysis. This is ATP-dependent 6-phosphofructokinase from Streptococcus pyogenes serotype M4 (strain MGAS10750).